Reading from the N-terminus, the 310-residue chain is Malate dehydrogenase (310 aa).

NAD(+) is bound by residues 7-12 (GAGNVG) and Asp32. Residues Arg81 and Arg87 each contribute to the substrate site. Residues Asn94 and 117-119 (VSN) each bind NAD(+). The substrate site is built by Asn119 and Arg150. The active-site Proton acceptor is the His174.

This sequence belongs to the LDH/MDH superfamily. MDH type 3 family. As to quaternary structure, homotetramer; arranged as a dimer of dimers.

It carries out the reaction (S)-malate + NAD(+) = oxaloacetate + NADH + H(+). In terms of biological role, catalyzes the reversible oxidation of malate to oxaloacetate. This chain is Malate dehydrogenase, found in Prosthecochloris vibrioformis (Chlorobium vibrioforme).